The chain runs to 965 residues: Chondroitin synthase (965 aa).

The tract at residues 132 to 418 (FTWYKNRKKS…IVKEKVPYIY (287 aa)) is galactosaminyltransferase; A1 domain. UDP-N-acetyl-alpha-D-galactosamine-binding positions include P158, R162, D189, Y218, R224, and 240–241 (DC). D242 is a binding site for Mn(2+). 362–363 (ED) contacts UDP-N-acetyl-alpha-D-galactosamine. A Mn(2+)-binding site is contributed by H387. The interval 419–683 (RKLLPIEDSH…ESRKYIFNKT (265 aa)) is glucuronosyltransferase; A2 domain. UDP-alpha-D-glucuronate is bound by residues Y442, D470, and 518 to 521 (QLDS). D522 provides a ligand contact to Mn(2+). Residues H582 and 604-605 (AV) each bind UDP-alpha-D-glucuronate. H632 provides a ligand contact to Mn(2+).

It belongs to the glycosyltransferase 2 family. CS/HAS subfamily. Requires Mn(2+) as cofactor.

It localises to the cell membrane. The catalysed reaction is 3-O-(beta-D-GlcA-(1-&gt;3)-beta-D-GalNAc-(1-&gt;4)-beta-D-GlcA-(1-&gt;3)-beta-D-Gal-(1-&gt;3)-beta-D-Gal-(1-&gt;4)-beta-D-Xyl)-L-seryl-[protein] + UDP-N-acetyl-alpha-D-galactosamine = 3-O-(beta-D-GalNAc-(1-&gt;4)-beta-D-GlcA-(1-&gt;3)-beta-D-GalNAc-(1-&gt;4)-beta-D-GlcA-(1-&gt;3)-beta-D-Gal-(1-&gt;3)-beta-D-Gal-(1-&gt;4)-beta-D-Xyl)-L-seryl-[protein] + UDP + H(+). The enzyme catalyses 3-O-{beta-D-GlcA-(1-&gt;3)-[beta-D-GalNAc-(1-&gt;4)-beta-D-GlcA-(1-&gt;3)](n)-beta-D-GalNAc-(1-&gt;4)-beta-D-GlcA-(1-&gt;3)-beta-D-Gal-(1-&gt;3)-beta-D-Gal-(1-&gt;4)-beta-D-Xyl}-L-seryl-[protein] + UDP-N-acetyl-alpha-D-galactosamine = 3-O-{[beta-D-GalNAc-(1-&gt;4)-beta-D-GlcA-(1-&gt;3)](n+1)-beta-D-GalNAc-(1-&gt;4)-beta-D-GlcA-(1-&gt;3)-beta-D-Gal-(1-&gt;3)-beta-D-Gal-(1-&gt;4)-beta-D-Xyl}-L-seryl-[protein] + UDP + H(+). It carries out the reaction 3-O-(beta-D-GalNAc-(1-&gt;4)-beta-D-GlcA-(1-&gt;3)-beta-D-Gal-(1-&gt;3)-beta-D-Gal-(1-&gt;4)-beta-D-Xyl)-L-seryl-[protein] + UDP-alpha-D-glucuronate = 3-O-(beta-D-GlcA-(1-&gt;3)-beta-D-GalNAc-(1-&gt;4)-beta-D-GlcA-(1-&gt;3)-beta-D-Gal-(1-&gt;3)-beta-D-Gal-(1-&gt;4)-beta-D-Xyl)-L-seryl-[protein] + UDP + H(+). It catalyses the reaction 3-O-{[beta-D-GalNAc-(1-&gt;4)-beta-D-GlcA-(1-&gt;3)](n)-beta-D-GalNAc-(1-&gt;4)-beta-D-GlcA-(1-&gt;3)-beta-D-Gal-(1-&gt;3)-beta-D-Gal-(1-&gt;4)-beta-D-Xyl}-L-seryl-[protein] + UDP-alpha-D-glucuronate = 3-O-{beta-D-GlcA-(1-&gt;3)-[beta-D-GalNAc-(1-&gt;4)-beta-D-GlcA-(1-&gt;3)](n)-beta-D-GalNAc-(1-&gt;4)-beta-D-GlcA-(1-&gt;3)-beta-D-Gal-(1-&gt;3)-beta-D-Gal-(1-&gt;4)-beta-D-Xyl}-L-seryl-[protein] + UDP + H(+). Its function is as follows. Glycosyltransferase that catalyzes elongation of chondroitin, a polysaccharide composed of a repeating disaccharide of N-acetylgalactosamine (GalNAc) and glucuronic acid (GlcUA) units, by alternatively transferring the GlcUA and GalNAc moiety from UDP-GlcUA and UDP-GalNAc to the non-reducing ends of the chondroitin chain. Each chondroitin unit has the composition beta-(1-&gt;4)-GlcUA-beta-(1-&gt;3)-GalNAc. This chain is Chondroitin synthase (fcbD), found in Pasteurella multocida (strain Pm70).